Consider the following 114-residue polypeptide: Putative pterin-4-alpha-carbinolamine dehydratase (114 aa).

The protein belongs to the pterin-4-alpha-carbinolamine dehydratase family.

It carries out the reaction (4aS,6R)-4a-hydroxy-L-erythro-5,6,7,8-tetrahydrobiopterin = (6R)-L-erythro-6,7-dihydrobiopterin + H2O. The polypeptide is Putative pterin-4-alpha-carbinolamine dehydratase (Methylococcus capsulatus (strain ATCC 33009 / NCIMB 11132 / Bath)).